The chain runs to 156 residues: ATP synthase subunit b (156 aa).

The helical transmembrane segment at 7–27 (LIGQLIAFAIFVWFCMKYVWP) threads the bilayer.

Belongs to the ATPase B chain family. In terms of assembly, F-type ATPases have 2 components, F(1) - the catalytic core - and F(0) - the membrane proton channel. F(1) has five subunits: alpha(3), beta(3), gamma(1), delta(1), epsilon(1). F(0) has three main subunits: a(1), b(2) and c(10-14). The alpha and beta chains form an alternating ring which encloses part of the gamma chain. F(1) is attached to F(0) by a central stalk formed by the gamma and epsilon chains, while a peripheral stalk is formed by the delta and b chains.

It is found in the cell inner membrane. In terms of biological role, f(1)F(0) ATP synthase produces ATP from ADP in the presence of a proton or sodium gradient. F-type ATPases consist of two structural domains, F(1) containing the extramembraneous catalytic core and F(0) containing the membrane proton channel, linked together by a central stalk and a peripheral stalk. During catalysis, ATP synthesis in the catalytic domain of F(1) is coupled via a rotary mechanism of the central stalk subunits to proton translocation. Component of the F(0) channel, it forms part of the peripheral stalk, linking F(1) to F(0). In Histophilus somni (strain 129Pt) (Haemophilus somnus), this protein is ATP synthase subunit b.